The following is a 383-amino-acid chain: MNDMVNLLDFDAQGLLAYCESLGEKSFRAKQLQRWIHQSGAADFGEMTDLAKSLREKLATRATIQAPAVISDHLSSDGTRKWLVDVGAGNAVETVYIPEETRGTLCVSSQAGCAVNCRFCSTGKQGFSRNLSTGEIVGQLWMAEFAMRKQLGRGPKDDRVITNVVMMGMGEPLLNYDAVVPAMRLMLDDNAYGLSRRRVTLSTSGVVPMMDRLSQDLPVALAVSLHASNDALRDVLVPLNKKYPLAELMAACRRYLEFAPRDFITFEYCMLDGVNDSVEHARELLRVVADVPCKFNLIPFNPFPESGLKRSNNEQIRRFSQVLLDAGIVTTIRKTRGDDIDAACGQLAGEVKDRTRLAERGKFGKTVPIQVIGADSTHRMGSA.

Catalysis depends on glutamate 93, which acts as the Proton acceptor. The Radical SAM core domain maps to 99–339 (EETRGTLCVS…TTIRKTRGDD (241 aa)). Cysteine 106 and cysteine 344 are oxidised to a cystine. 3 residues coordinate [4Fe-4S] cluster: cysteine 113, cysteine 117, and cysteine 120. S-adenosyl-L-methionine-binding positions include 170-171 (GE), serine 202, 224-226 (SLH), and asparagine 301. The active-site S-methylcysteine intermediate is the cysteine 344.

It belongs to the radical SAM superfamily. RlmN family. The cofactor is [4Fe-4S] cluster.

The protein resides in the cytoplasm. The catalysed reaction is adenosine(2503) in 23S rRNA + 2 reduced [2Fe-2S]-[ferredoxin] + 2 S-adenosyl-L-methionine = 2-methyladenosine(2503) in 23S rRNA + 5'-deoxyadenosine + L-methionine + 2 oxidized [2Fe-2S]-[ferredoxin] + S-adenosyl-L-homocysteine. It carries out the reaction adenosine(37) in tRNA + 2 reduced [2Fe-2S]-[ferredoxin] + 2 S-adenosyl-L-methionine = 2-methyladenosine(37) in tRNA + 5'-deoxyadenosine + L-methionine + 2 oxidized [2Fe-2S]-[ferredoxin] + S-adenosyl-L-homocysteine. Functionally, specifically methylates position 2 of adenine 2503 in 23S rRNA and position 2 of adenine 37 in tRNAs. m2A2503 modification seems to play a crucial role in the proofreading step occurring at the peptidyl transferase center and thus would serve to optimize ribosomal fidelity. The protein is Dual-specificity RNA methyltransferase RlmN of Ralstonia nicotianae (strain ATCC BAA-1114 / GMI1000) (Ralstonia solanacearum).